A 466-amino-acid chain; its full sequence is Coagulation factor VII (466 aa).

A signal peptide spans 1–20 (MVSQALRLLCLLLGLQGCLA). A propeptide spanning residues 21 to 60 (AGGVAKASGGETRDMPWKPGPHRVFVTQEEAHGVLHRRRR) is cleaved from the precursor. One can recognise a Gla domain in the interval 61–105 (ANAFLEELRPGSLERECKEEQCSFEEAREIFKDAERTKLFWISYS). Residues Glu-66, Glu-67, Glu-74, Glu-76, Glu-79, Glu-80, Glu-85, Glu-86, Glu-89, and Glu-95 each carry the 4-carboxyglutamate modification. Cys-77 and Cys-82 are disulfide-bonded. In terms of domain architecture, EGF-like 1; calcium-binding spans 106–142 (DGDQCASSPCQNGGSCKDQLQSYICFCLPAFEGRNCE). Intrachain disulfides connect Cys-110–Cys-121, Cys-115–Cys-130, Cys-132–Cys-141, Cys-151–Cys-162, Cys-158–Cys-172, Cys-174–Cys-187, Cys-195–Cys-322, Cys-219–Cys-224, Cys-238–Cys-254, and Cys-370–Cys-389. O-linked (Glc...) serine; alternate glycosylation occurs at Ser-112. Ser-112 carries O-linked (Xyl...) serine; alternate glycosylation. Ser-120 carries an O-linked (Fuc) serine glycan. Asp-123 is subject to (3R)-3-hydroxyaspartate. One can recognise an EGF-like 2 domain in the interval 147-188 (DQLICVNENGGCEQYCSDHTGTKRSCRCHEGYSLLADGVSCT). N-linked (GlcNAc...) asparagine glycosylation occurs at Asn-205. Residues 213–452 (IVGGKVCPKG…YIEWLQKLMR (240 aa)) enclose the Peptidase S1 domain. Catalysis depends on charge relay system residues His-253 and Asp-302. N-linked (GlcNAc...) asparagine glycosylation is present at Asn-382. Substrate is bound at residue Asp-398. A disulfide bridge links Cys-400 with Cys-428. Residue Ser-404 is the Charge relay system of the active site.

It belongs to the peptidase S1 family. In terms of assembly, heterodimer of a light chain and a heavy chain linked by a disulfide bond. Interacts (activated) with iripin-8, a serine protease inhibitor from Ixodes ricinus saliva. Post-translationally, the vitamin K-dependent, enzymatic carboxylation of some glutamate residues allows the modified protein to bind calcium. The iron and 2-oxoglutarate dependent 3-hydroxylation of aspartate and asparagine is (R) stereospecific within EGF domains. In terms of processing, O- and N-glycosylated. N-glycosylation at Asn-205 occurs cotranslationally and is mediated by STT3A-containing complexes, while glycosylation at Asn-382 is post-translational and is mediated STT3B-containing complexes before folding. O-fucosylated by POFUT1 on a conserved serine or threonine residue found in the consensus sequence C2-X(4,5)-[S/T]-C3 of EGF domains, where C2 and C3 are the second and third conserved cysteines. Post-translationally, can be either O-glucosylated or O-xylosylated at Ser-112 by POGLUT1 in vitro. As to expression, plasma.

The protein localises to the secreted. The catalysed reaction is Selective cleavage of Arg-|-Ile bond in factor X to form factor Xa.. Functionally, initiates the extrinsic pathway of blood coagulation. Serine protease that circulates in the blood in a zymogen form. Factor VII is converted to factor VIIa by factor Xa, factor XIIa, factor IXa, or thrombin by minor proteolysis. In the presence of tissue factor and calcium ions, factor VIIa then converts factor X to factor Xa by limited proteolysis. Factor VIIa also converts factor IX to factor IXa in the presence of tissue factor and calcium. This Homo sapiens (Human) protein is Coagulation factor VII (F7).